The chain runs to 103 residues: MFDKMNLGDLGKVFEEIQERAKKLQEEQESKSFIAKSGGGLIKVTANGKGEIIDIEIDDSLLEDKDSLQILLISAINDVLKMVEEDKQRSALSMMTPDIFGQK.

This sequence belongs to the YbaB/EbfC family. Homodimer.

The protein resides in the cytoplasm. It localises to the nucleoid. Functionally, binds to DNA and alters its conformation. May be involved in regulation of gene expression, nucleoid organization and DNA protection. The protein is Nucleoid-associated protein NIS_0256 of Nitratiruptor sp. (strain SB155-2).